An 88-amino-acid polypeptide reads, in one-letter code: Small ribosomal subunit protein uS15c (88 aa).

The protein belongs to the universal ribosomal protein uS15 family. In terms of assembly, part of the 30S ribosomal subunit.

The protein localises to the plastid. It is found in the chloroplast. The protein is Small ribosomal subunit protein uS15c (rps15) of Nasturtium officinale (Watercress).